The primary structure comprises 392 residues: Copper-containing nitrite reductase (392 aa).

The first 18 residues, 1–18 (MKRQALAAMIASLFALAA), serve as a signal peptide directing secretion. Cysteine 19 carries N-palmitoyl cysteine lipidation. Cysteine 19 is lipidated: S-diacylglycerol cysteine. Residues 30 to 49 (ETPAASAEAASSAAQATAET) form a disordered region. 2 consecutive Plastocyanin-like domains span residues 101-195 (WTFD…ILVE) and 245-346 (GHVG…LKVE). Residues histidine 134, histidine 139, histidine 174, cysteine 175, histidine 183, and methionine 188 each contribute to the Cu cation site. Position 139 (histidine 139) interacts with substrate. Histidine 280 contacts substrate. Histidine 329 is a Cu cation binding site. The interval 367-392 (GAASAPAASAPAASAPAASASEKSVY) is disordered. 4 tandem repeats follow at residues 368–372 (AASAP), 373–377 (AASAP), 378–382 (AASAP), and 383–387 (AASAS). The tract at residues 368-387 (AASAPAASAPAASAPAASAS) is 4 X 5 AA tandem repeats of A-A-S-A-P.

The protein belongs to the multicopper oxidase family. In terms of assembly, homotrimer. Cu(+) is required as a cofactor. Requires Cu(2+) as cofactor. In terms of processing, palmitoylated.

It localises to the cell outer membrane. It catalyses the reaction nitric oxide + Fe(III)-[cytochrome c] + H2O = Fe(II)-[cytochrome c] + nitrite + 2 H(+). Catalyzes the reduction of nitrite to nitric oxide (NO), probably with azurin as electron donor. Essential for growth and survival in oxygen-depleted environments. Can also provide protection against killing by normal human sera. The protein is Copper-containing nitrite reductase (aniA) of Neisseria gonorrhoeae.